Consider the following 482-residue polypeptide: ATP synthase subunit beta (482 aa).

162–169 (GGAGVGKT) provides a ligand contact to ATP.

F-type ATPases have 2 components, CF(1) - the catalytic core - and CF(0) - the membrane proton channel. CF(1) has five subunits: alpha(3), beta(3), gamma(1), delta(1), epsilon(1). CF(0) has four main subunits: a(1), b(1), b'(1) and c(9-12).

The protein localises to the cellular thylakoid membrane. The enzyme catalyses ATP + H2O + 4 H(+)(in) = ADP + phosphate + 5 H(+)(out). With respect to regulation, inhibited by dicyclohexylcarbodiimide. Its function is as follows. Produces ATP from ADP in the presence of a proton gradient across the membrane. The catalytic sites are hosted primarily by the beta subunits. Functionally, the complex from the organism is particularly stable to disruption and remains functional after 6 hrs at 55 degrees Celsius. This is ATP synthase subunit beta from Thermosynechococcus vestitus (strain NIES-2133 / IAM M-273 / BP-1).